Reading from the N-terminus, the 176-residue chain is Large ribosomal subunit protein uL6 (176 aa).

This sequence belongs to the universal ribosomal protein uL6 family. As to quaternary structure, part of the 50S ribosomal subunit.

In terms of biological role, this protein binds to the 23S rRNA, and is important in its secondary structure. It is located near the subunit interface in the base of the L7/L12 stalk, and near the tRNA binding site of the peptidyltransferase center. The chain is Large ribosomal subunit protein uL6 from Shewanella sediminis (strain HAW-EB3).